The chain runs to 188 residues: ATP-dependent protease subunit HslV (188 aa).

Residue Thr7 is part of the active site. Residues Gly162, Cys165, and Ser168 each coordinate Na(+).

Belongs to the peptidase T1B family. HslV subfamily. A double ring-shaped homohexamer of HslV is capped on each side by a ring-shaped HslU homohexamer. The assembly of the HslU/HslV complex is dependent on binding of ATP.

The protein resides in the cytoplasm. It carries out the reaction ATP-dependent cleavage of peptide bonds with broad specificity.. With respect to regulation, allosterically activated by HslU binding. In terms of biological role, protease subunit of a proteasome-like degradation complex believed to be a general protein degrading machinery. The sequence is that of ATP-dependent protease subunit HslV from Thiobacillus denitrificans (strain ATCC 25259 / T1).